Reading from the N-terminus, the 231-residue chain is MRFHIMTLFPEIFNSYMDESIMKRAVEKGIIEVHIYNIRDFSNNKHKKVDDYPFGGGAGMVMTPQPIYDTYKHIITTHNINNPSVIYLTPKGKVYNQSMAKQMSLKEDIILLCGHYEGIDERIIDLIVTDEISIGDYVLTGGELPALIMIDSISRLIPGVLNQEESFEEESFKDNLLEYPHYTRPRDFEGLKVPEVLLSGNHKKIDEWRREESIRITKERRFDLYKKSNEK.

S-adenosyl-L-methionine is bound by residues glycine 114 and 134 to 139 (IGDYVL).

Belongs to the RNA methyltransferase TrmD family. Homodimer.

Its subcellular location is the cytoplasm. It carries out the reaction guanosine(37) in tRNA + S-adenosyl-L-methionine = N(1)-methylguanosine(37) in tRNA + S-adenosyl-L-homocysteine + H(+). Its function is as follows. Specifically methylates guanosine-37 in various tRNAs. The sequence is that of tRNA (guanine-N(1)-)-methyltransferase from Clostridioides difficile (strain 630) (Peptoclostridium difficile).